We begin with the raw amino-acid sequence, 253 residues long: Imidazole glycerol phosphate synthase subunit HisF (253 aa).

Active-site residues include Asp11 and Asp130.

This sequence belongs to the HisA/HisF family. In terms of assembly, heterodimer of HisH and HisF.

The protein localises to the cytoplasm. The catalysed reaction is 5-[(5-phospho-1-deoxy-D-ribulos-1-ylimino)methylamino]-1-(5-phospho-beta-D-ribosyl)imidazole-4-carboxamide + L-glutamine = D-erythro-1-(imidazol-4-yl)glycerol 3-phosphate + 5-amino-1-(5-phospho-beta-D-ribosyl)imidazole-4-carboxamide + L-glutamate + H(+). It participates in amino-acid biosynthesis; L-histidine biosynthesis; L-histidine from 5-phospho-alpha-D-ribose 1-diphosphate: step 5/9. Functionally, IGPS catalyzes the conversion of PRFAR and glutamine to IGP, AICAR and glutamate. The HisF subunit catalyzes the cyclization activity that produces IGP and AICAR from PRFAR using the ammonia provided by the HisH subunit. This is Imidazole glycerol phosphate synthase subunit HisF from Clostridium botulinum (strain Okra / Type B1).